The following is a 202-amino-acid chain: MLVWIDCEMTGLDLAHDGLIEVAALVTDGQLNVQGEGVDVIIKPEPQWLDHMNDFVRNMHTTSGLLAELDKGLTMAQAQDQVLDYIRTYVPQAGKAPLAGNTIGTDRSFLAKDMPKLESYVHYRNVDVSSIKELARRWYPRAFGHSPEKQGNHRALADIQESIEELMYWREVLMVPSPGPETTRCDEIAAKYQGFLTGAGRD.

The Exonuclease domain maps to 2-166; the sequence is LVWIDCEMTG…ADIQESIEEL (165 aa). Residue Y123 is part of the active site.

This sequence belongs to the oligoribonuclease family.

It localises to the cytoplasm. Functionally, 3'-to-5' exoribonuclease specific for small oligoribonucleotides. The polypeptide is Oligoribonuclease (Cutibacterium acnes (strain DSM 16379 / KPA171202) (Propionibacterium acnes)).